A 467-amino-acid polypeptide reads, in one-letter code: ATP synthase subunit beta (467 aa).

152 to 159 lines the ATP pocket; it reads GGAGVGKT.

This sequence belongs to the ATPase alpha/beta chains family. In terms of assembly, F-type ATPases have 2 components, CF(1) - the catalytic core - and CF(0) - the membrane proton channel. CF(1) has five subunits: alpha(3), beta(3), gamma(1), delta(1), epsilon(1). CF(0) has three main subunits: a(1), b(2) and c(9-12). The alpha and beta chains form an alternating ring which encloses part of the gamma chain. CF(1) is attached to CF(0) by a central stalk formed by the gamma and epsilon chains, while a peripheral stalk is formed by the delta and b chains.

Its subcellular location is the cell membrane. It carries out the reaction ATP + H2O + 4 H(+)(in) = ADP + phosphate + 5 H(+)(out). Functionally, produces ATP from ADP in the presence of a proton gradient across the membrane. The catalytic sites are hosted primarily by the beta subunits. This Caldicellulosiruptor bescii (strain ATCC BAA-1888 / DSM 6725 / KCTC 15123 / Z-1320) (Anaerocellum thermophilum) protein is ATP synthase subunit beta.